The sequence spans 549 residues: Chaperonin GroEL (549 aa).

Residues 30 to 33 (TLGP), K51, 87 to 91 (DGTTT), G415, and D497 contribute to the ATP site.

It belongs to the chaperonin (HSP60) family. Forms a cylinder of 14 subunits composed of two heptameric rings stacked back-to-back. Interacts with the co-chaperonin GroES.

The protein localises to the cytoplasm. It carries out the reaction ATP + H2O + a folded polypeptide = ADP + phosphate + an unfolded polypeptide.. Functionally, together with its co-chaperonin GroES, plays an essential role in assisting protein folding. The GroEL-GroES system forms a nano-cage that allows encapsulation of the non-native substrate proteins and provides a physical environment optimized to promote and accelerate protein folding. The polypeptide is Chaperonin GroEL (Pectobacterium atrosepticum (strain SCRI 1043 / ATCC BAA-672) (Erwinia carotovora subsp. atroseptica)).